Reading from the N-terminus, the 121-residue chain is 18 kDa learning-associated protein of slug (121 aa).

Disordered regions lie at residues 44–67 and 95–121; these read TMKT…GSME and AVKK…AIKW. A compositionally biased stretch (polar residues) spans 45–64; sequence MKTTEPIQENKTSEGTSTDG.

The protein belongs to the learning-associated protein family. In terms of tissue distribution, expressed predominantly in cerebral ganglia (at protein level). The mRNA is highly expressed in cerebral ganglia, and is detected at lower levels in visceral-pedal ganglia, head, and body, but is not detected in the tail.

The protein resides in the cytoplasm. The protein localises to the secreted. Its function is as follows. May be involved in modulating long-term memory formation and retention, at least with respect to odor-taste associative learning. The protein is 18 kDa learning-associated protein of slug of Lehmannia marginata (Tree slug).